The chain runs to 72 residues: Large ribosomal subunit protein uL29 (72 aa).

The protein belongs to the universal ribosomal protein uL29 family.

This Thermus thermophilus (strain ATCC BAA-163 / DSM 7039 / HB27) protein is Large ribosomal subunit protein uL29.